Consider the following 374-residue polypeptide: Ras-related GTP-binding protein B (374 aa).

At M1 the chain carries N-acetylmethionine. Residues M1–V15 are compositionally biased toward basic and acidic residues. A disordered region spans residues M1–L30. Residues S49 and G50 each coordinate GTP. G50, S51, G52, K53, T54, S55, T69, and T75 together coordinate GDP. Residues G52, K53, T54, S55, T69, T75, G126, and H188 each coordinate GTP. Positions 188 and 191 each coordinate GDP. Residue K203 forms a Glycyl lysine isopeptide (Lys-Gly) (interchain with G-Cter in ubiquitin) linkage. L209 and I225 together coordinate GDP. I225 is a binding site for GTP. Residues K281, K291, and K305 each participate in a glycyl lysine isopeptide (Lys-Gly) (interchain with G-Cter in ubiquitin) cross-link.

It belongs to the GTR/RAG GTP-binding protein family. In terms of assembly, interacts with RRAGC and RRAGD; heterodimerization stabilizes RRAG proteins. The GTP-bound form of RRAGB (in complex with the GDP-bound form of RRAGC or RRAGD) interacts with RPTOR, thereby promoting recruitment of mTORC1 to the lysosomes. Component of the lysosomal folliculin complex (LFC), composed of FLCN, FNIP1 (or FNIP2), RagA/RRAGA or RagB/RRAGB GDP-bound, RagC/RRAGC or RagD/RRAGD GTP-bound, and Ragulator. Interacts with SH3BP4; the interaction with this negative regulator is most probably direct, preferentially occurs with the inactive GDP-bound form of RRAGB, is negatively regulated by amino acids and prevents interaction with RPTOR. Interacts with the GATOR1 complex; inactivates RRAGB. The Rag heterodimer interacts with SLC38A9; the probable amino acid sensor. Interacts with SESN1, SESN2 and SESN3.

It is found in the cytoplasm. It localises to the lysosome membrane. The enzyme catalyses GTP + H2O = GDP + phosphate + H(+). The activation of GTP-binding proteins is generally mediated by a guanine exchange factor (GEF), while inactivation through hydrolysis of bound GTP is catalyzed by a GTPase activating protein (GAP). The Ragulator complex functions as a GEF and promotes the active GTP-bound form. The GATOR1 complex functions as a GAP and stimulates RRAGB GTPase activity to turn it into its inactive GDP-bound form, preventing mTORC1 recruitment and activation. In terms of biological role, guanine nucleotide-binding protein that plays a crucial role in the cellular response to amino acid availability through regulation of the mTORC1 signaling cascade. Forms heterodimeric Rag complexes with RagC/RRAGC or RagD/RRAGD and cycles between an inactive GDP-bound and an active GTP-bound form: RagB/RRAGB is in its active form when GTP-bound RagB/RRAGB forms a complex with GDP-bound RagC/RRAGC (or RagD/RRAGD) and in an inactive form when GDP-bound RagB/RRAGB heterodimerizes with GTP-bound RagC/RRAGC (or RagD/RRAGD). In its GTP-bound active form, promotes the recruitment of mTORC1 to the lysosomes and its subsequent activation by the GTPase RHEB. Involved in the RCC1/Ran-GTPase pathway. In Mus musculus (Mouse), this protein is Ras-related GTP-binding protein B.